The sequence spans 312 residues: Telomere-binding protein OPG077 (312 aa).

This sequence belongs to the orthopoxvirus OPG077 family.

It localises to the virion. Its function is as follows. DNA-binding protein which binds to the hairpin form of the viral telomeric sequence. Required for the production of mature virions (MV). This chain is Telomere-binding protein OPG077 (OPG077), found in Rabbitpox virus (strain Utrecht) (RPV).